A 195-amino-acid chain; its full sequence is HTH-type transcriptional regulator BetI (195 aa).

An HTH tetR-type domain is found at 8–68 (PIRRQQLIEA…ATMRYLISHL (61 aa)). Positions 31-50 (SIVQIARRAGVSNGIISHYF) form a DNA-binding region, H-T-H motif.

Its pathway is amine and polyamine biosynthesis; betaine biosynthesis via choline pathway [regulation]. Functionally, repressor involved in the biosynthesis of the osmoprotectant glycine betaine. It represses transcription of the choline transporter BetT and the genes of BetAB involved in the synthesis of glycine betaine. The sequence is that of HTH-type transcriptional regulator BetI from Pectobacterium atrosepticum (strain SCRI 1043 / ATCC BAA-672) (Erwinia carotovora subsp. atroseptica).